The following is a 551-amino-acid chain: MLKLRDWQEKLKDKVIEGLRNNFLVALNAPTGSGKTLFSLLVSLEVKPKVLFVVRTHNEFYPIYRDLTKIREKRNITFSFLVGKPSSCLYAEKGAESEDIPCKYCELKGSIVEVKTDDSPLSLVKKLKKDGLQDKFCPYYSLLNSLYKADVIALTYPYFFIDRYREFIDIDLREYMIVIDEAHNLDKVNELEERSLSEITIQMAIKQSKSEESRRILSKLLNQLREVVLPDEKYIKVENVPKLSKEELEILADDYEDIRKDSLKQGKVNKIHIGSILRFFSLLSIGSFIPFSYSKRLVIKNPEISYYLNLLNDNELSIILMSGTLPPREYMEKVWGIKRNMLYLDVEREIQKRVSGSYECYIGVDVTSKYDMRSDNMWKRYADYLLKIYFQAKANVLVVFPSYEIMDRVMSRISLPKYVESEDSSVEDLYSAISANNKVLIGSVGKGKLAEGIELRNNDRSLISDVVIVGIPYPPPDDYLKILAQRVSLKMNRENEEFLFKIPALVTIKQAIGRAIRDVNDKCNVWLLDKRFESLYWKKNLKCLNANKMKL.

The region spanning 1–228 is the Helicase ATP-binding domain; it reads MLKLRDWQEK…KLLNQLREVV (228 aa). Position 29–36 (29–36) interacts with ATP; that stretch reads APTGSGKT. [4Fe-4S] cluster-binding residues include C88, C102, C105, and C137. Residues 180-183 carry the DEAH box motif; sequence DEAH.

It belongs to the helicase family. RAD3/XPD subfamily. Monomer. The cofactor is [4Fe-4S] cluster.

The enzyme catalyses Couples ATP hydrolysis with the unwinding of duplex DNA at the replication fork by translocating in the 5'-3' direction. This creates two antiparallel DNA single strands (ssDNA). The leading ssDNA polymer is the template for DNA polymerase III holoenzyme which synthesizes a continuous strand.. It catalyses the reaction ATP + H2O = ADP + phosphate + H(+). In terms of biological role, ATP-dependent 5'-3' DNA helicase. Thought to be involved in nucleotide excision repair (NER) of DNA. The polypeptide is ATP-dependent DNA helicase XPD (Sulfolobus acidocaldarius (strain ATCC 33909 / DSM 639 / JCM 8929 / NBRC 15157 / NCIMB 11770)).